The sequence spans 480 residues: tRNA-2-methylthio-N(6)-dimethylallyladenosine synthase (480 aa).

Residues 29-145 (GSFWIQTFGC…LEALLTQVDN (117 aa)) form the MTTase N-terminal domain. [4Fe-4S] cluster is bound by residues cysteine 38, cysteine 74, cysteine 108, cysteine 180, cysteine 184, and cysteine 187. The 238-residue stretch at 166–403 (RDSTICAWVN…NALVERIALQ (238 aa)) folds into the Radical SAM core domain. In terms of domain architecture, TRAM spans 406–474 (SRYSGKVEQV…AFSLSGTPCE (69 aa)).

It belongs to the methylthiotransferase family. MiaB subfamily. Monomer. The cofactor is [4Fe-4S] cluster.

The protein resides in the cytoplasm. The catalysed reaction is N(6)-dimethylallyladenosine(37) in tRNA + (sulfur carrier)-SH + AH2 + 2 S-adenosyl-L-methionine = 2-methylsulfanyl-N(6)-dimethylallyladenosine(37) in tRNA + (sulfur carrier)-H + 5'-deoxyadenosine + L-methionine + A + S-adenosyl-L-homocysteine + 2 H(+). Its function is as follows. Catalyzes the methylthiolation of N6-(dimethylallyl)adenosine (i(6)A), leading to the formation of 2-methylthio-N6-(dimethylallyl)adenosine (ms(2)i(6)A) at position 37 in tRNAs that read codons beginning with uridine. The polypeptide is tRNA-2-methylthio-N(6)-dimethylallyladenosine synthase (Prochlorococcus marinus (strain MIT 9313)).